The chain runs to 1020 residues: X-linked retinitis pigmentosa GTPase regulator (1020 aa).

6 RCC1 repeats span residues 54-105 (NKLY…STEG), 106-158 (GNVY…LTED), 159-208 (GRLF…VTTD), 209-261 (GELY…LTEN), 262-313 (AVYT…ITDI), and 314-367 (GLMY…FAAP). Phosphoserine occurs at positions 418 and 518. 3 disordered regions span residues 609 to 776 (HENN…IISK), 790 to 906 (EIPE…KEKA), and 989 to 1020 (DNKD…CTIL). 8 stretches are compositionally biased toward basic and acidic residues: residues 618–636 (LDAK…QKES), 644–665 (EKET…EKST), 685–698 (EENK…ESCK), 704–715 (DSERESVEKPDS), 760–771 (KLIEQGNEKETK), 790–802 (EIPE…EDSK), 816–853 (ENVK…LKLE), and 883–906 (SKTE…KEKA). Polar residues predominate over residues 996–1009 (NHMSQNHQNIPPTN). At C1017 the chain carries Cysteine methyl ester. C1017 carries S-geranylgeranyl cysteine lipidation. Positions 1018–1020 (TIL) are cleaved as a propeptide — removed in mature form.

Interacts with SPATA7. Interacts with CEP290. Interacts with WHRN. Interacts with PDE6D. Interacts with RPGRIP1. Interacts with RPGRIP1L. PDE6D, RPGRIP1 and RPGRIP1L may compete for the same binding sites. Interacts with RAB37 and RAB8A (in GDP-bound forms); functions as GEF for RAB37 and RAB8A. As to quaternary structure, isoform 6 interacts with NPM1 (via C-terminus). Isoform 6 interacts with SMC1A and SMC3. Prenylated. In terms of tissue distribution, heart, brain, placenta, lung, liver, muscle, kidney, retina, pancreas and fetal retinal pigment epithelium. Isoform 3 is found only in the retina. Colocalizes with RPGRIP1 in the outer segment of rod photoreceptors and cone outer segments.

It is found in the cytoplasm. The protein resides in the cytoskeleton. The protein localises to the flagellum axoneme. Its subcellular location is the golgi apparatus. It localises to the cell projection. It is found in the cilium. The protein resides in the microtubule organizing center. The protein localises to the centrosome. Its subcellular location is the cilium basal body. It localises to the cilium axoneme. Functionally, acts as a guanine-nucleotide releasing factor (GEF) for RAB8A and RAB37 by promoting the conversion of inactive RAB-GDP to the active form RAB-GTP. GEF activity towards RAB8A may facilitate ciliary trafficking by modulating ciliary intracellular localization of RAB8A. GEF activity towards RAB37 maintains autophagic homeostasis and retinal function. Involved in photoreceptor integrity. May control cilia formation by regulating actin stress filaments and cell contractility. May be involved in microtubule organization and regulation of transport in primary cilia. May play a critical role in spermatogenesis and in intraflagellar transport processes. In Homo sapiens (Human), this protein is X-linked retinitis pigmentosa GTPase regulator.